Here is a 120-residue protein sequence, read N- to C-terminus: Small ribosomal subunit protein uS13 (120 aa).

A disordered region spans residues 93–120; it reads RKGLPVRGQTTKNNARTRKGKKKTVGSK. Over residues 107–120 the composition is skewed to basic residues; the sequence is ARTRKGKKKTVGSK.

The protein belongs to the universal ribosomal protein uS13 family. Part of the 30S ribosomal subunit. Forms a loose heterodimer with protein S19. Forms two bridges to the 50S subunit in the 70S ribosome.

In terms of biological role, located at the top of the head of the 30S subunit, it contacts several helices of the 16S rRNA. In the 70S ribosome it contacts the 23S rRNA (bridge B1a) and protein L5 of the 50S subunit (bridge B1b), connecting the 2 subunits; these bridges are implicated in subunit movement. Contacts the tRNAs in the A and P-sites. The protein is Small ribosomal subunit protein uS13 of Helicobacter acinonychis (strain Sheeba).